A 456-amino-acid chain; its full sequence is Solute carrier family 38 member 6 (456 aa).

Methionine 1 is modified (N-acetylmethionine). Residues serine 4 and serine 7 each carry the phosphoserine modification. 5 helical membrane passes run 42-62 (SPGV…MGSG), 85-105 (VALL…QTAV), 111-131 (LGLF…IIIQ), 170-190 (LLII…KIGF), and 191-211 (LGYT…VVII). The cysteines at positions 218 and 238 are disulfide-linked. Asparagine 233 carries an N-linked (GlcNAc...) asparagine glycan. The helical transmembrane segment at 250–270 (AYALPTMAFSFLCHTSILPIY) threads the bilayer. Asparagine 283 carries an N-linked (GlcNAc...) asparagine glycan. A run of 5 helical transmembrane segments spans residues 288-308 (AIAL…LTFY), 327-347 (VVVM…VPLI), 371-391 (FLIT…VPDI), 394-414 (VFGV…PGLF), and 431-451 (AFVL…LIIF).

Belongs to the amino acid/polyamine transporter 2 family.

The protein resides in the cell membrane. The protein localises to the synapse. It catalyses the reaction L-glutamine(out) = L-glutamine(in). The enzyme catalyses L-glutamate(out) = L-glutamate(in). Functionally, amino acid transporter with an apparent selectivity for L-glutamine and L-glutamate. May facilitate glutamine uptake in excitatory neurons. The transport mechanism remains to be elucidated. The chain is Solute carrier family 38 member 6 from Homo sapiens (Human).